The following is a 304-amino-acid chain: PTB domain-containing engulfment adapter protein 1 (304 aa).

Thr16 is modified (phosphothreonine). In terms of domain architecture, PID spans Ser21–Leu176. A coiled-coil region spans residues Lys158–Pro202. Ser223 bears the Phosphoserine mark. Residues Ser223 to Ser246 are disordered. A compositionally biased stretch (polar residues) spans Ile225–Thr237.

It belongs to the ced-6 family. Homodimer. Interacts with clathrin. Interacts with GDP-bound ARF6, but not with GTP-bound ARF6. Part of a complex composed of GULP1, ACAP1 and ARF6. Interacts with ACAP1, LRP1, MEGF10 and STAB2. As to expression, widely expressed. Detected in macrophages, pancreas, kidney, skeletal muscle, heart, colon, intestine, lung, placenta and ovary.

The protein localises to the cytoplasm. Functionally, may function as an adapter protein. Required for efficient phagocytosis of apoptotic cells. Modulates cellular glycosphingolipid and cholesterol transport. May play a role in the internalization and endosomal trafficking of various LRP1 ligands, such as PSAP. Increases cellular levels of GTP-bound ARF6. This Homo sapiens (Human) protein is PTB domain-containing engulfment adapter protein 1 (GULP1).